We begin with the raw amino-acid sequence, 178 residues long: MSNKESNVALQTLRVTKDMKDFLSHRIVGEPPANIKIEYQKIHRYRTCVCPSTGHISELCPSGDLILSLGAHRNVIAAATVYDVVKNKTKSTTSKAGTSSTLSSLGLSGFQKPKIGSKNKKTMFSKQNNSTNESDESEGEEGSSLNDLPKSDLINAIMELASQGRNNSKGKGRRGGKR.

A disordered region spans residues 108 to 178 (SGFQKPKIGS…KGKGRRGGKR (71 aa)). The span at 168 to 178 (SKGKGRRGGKR) shows a compositional bias: basic residues.

This sequence belongs to the phytoreovirus RNA-binding protein family.

It is found in the host cytoplasm. Its function is as follows. Constituent of viral factories. Binds to ssRNA and dsRNA. This is RNA-binding protein from Wound tumor virus (strain NJ) (WTV).